The primary structure comprises 276 residues: MGIKKFKPTTNGRRNMTALDFAEITASRPEKSLTEKLSKKGGRNNQGRLTVRHQGGGHKRKYRIIDFKRNKDGIAGRIATIEYDPNRSANIALVHYIDGEKRYILAPKGLKVDMQVMSGVEADIKVGNALPLSNIPVGTLIHNIELKPGKGGQLVRSAGTSAQLLGKDGKYAIVRLQSGETRMILATCRATVGAVGNEEHELVNIGKAGRSRWLGKRPTVRGSVMNPVDHPHGGGEGRAPIGRSGPLTPWGKPALGYKTRKKNKASDKYIVRRSKK.

2 disordered regions span residues 30–57 and 219–276; these read EKSL…QGGG and TVRG…RSKK.

Belongs to the universal ribosomal protein uL2 family. In terms of assembly, part of the 50S ribosomal subunit. Forms a bridge to the 30S subunit in the 70S ribosome.

One of the primary rRNA binding proteins. Required for association of the 30S and 50S subunits to form the 70S ribosome, for tRNA binding and peptide bond formation. It has been suggested to have peptidyltransferase activity; this is somewhat controversial. Makes several contacts with the 16S rRNA in the 70S ribosome. This chain is Large ribosomal subunit protein uL2, found in Exiguobacterium sibiricum (strain DSM 17290 / CCUG 55495 / CIP 109462 / JCM 13490 / 255-15).